The following is a 221-amino-acid chain: Urease accessory protein UreF (221 aa).

Belongs to the UreF family. As to quaternary structure, ureD, UreF and UreG form a complex that acts as a GTP-hydrolysis-dependent molecular chaperone, activating the urease apoprotein by helping to assemble the nickel containing metallocenter of UreC. The UreE protein probably delivers the nickel.

It is found in the cytoplasm. Required for maturation of urease via the functional incorporation of the urease nickel metallocenter. In Microcystis aeruginosa (strain NIES-843 / IAM M-2473), this protein is Urease accessory protein UreF.